A 478-amino-acid chain; its full sequence is Chromosomal replication initiator protein DnaA (478 aa).

Positions 1 to 90 (MSVELWQQCV…KRSSAPRAVQ (90 aa)) are domain I, interacts with DnaA modulators. The domain II stretch occupies residues 91-141 (PASPPPAVVQAAPVAIEEASAARTVDAQPVAPATVRTERSVQVEGGLKHTS). Residues 142–358 (YLNRAFTFEN…GALKRVIAHS (217 aa)) are domain III, AAA+ region. ATP is bound by residues glycine 186, glycine 188, lysine 189, and threonine 190. A domain IV, binds dsDNA region spans residues 359–478 (HFTNHPITIE…YKNLLRTLTT (120 aa)).

Belongs to the DnaA family. As to quaternary structure, oligomerizes as a right-handed, spiral filament on DNA at oriC.

It localises to the cytoplasm. Its function is as follows. Plays an essential role in the initiation and regulation of chromosomal replication. ATP-DnaA binds to the origin of replication (oriC) to initiate formation of the DNA replication initiation complex once per cell cycle. Binds the DnaA box (a 9 base pair repeat at the origin) and separates the double-stranded (ds)DNA. Forms a right-handed helical filament on oriC DNA; dsDNA binds to the exterior of the filament while single-stranded (ss)DNA is stabiized in the filament's interior. The ATP-DnaA-oriC complex binds and stabilizes one strand of the AT-rich DNA unwinding element (DUE), permitting loading of DNA polymerase. After initiation quickly degrades to an ADP-DnaA complex that is not apt for DNA replication. Binds acidic phospholipids. In Azotobacter vinelandii (strain DJ / ATCC BAA-1303), this protein is Chromosomal replication initiator protein DnaA.